The primary structure comprises 79 residues: uncharacterized protein (79 aa).

This is an uncharacterized protein from Bacillus subtilis (strain 168).